The primary structure comprises 189 residues: Riboflavin kinase (189 aa).

Positions 42 and 44 each coordinate Mg(2+). Glu-124 functions as the Nucleophile in the catalytic mechanism.

This sequence belongs to the flavokinase family. It depends on Zn(2+) as a cofactor. The cofactor is Mg(2+).

It carries out the reaction riboflavin + ATP = FMN + ADP + H(+). It functions in the pathway cofactor biosynthesis; FMN biosynthesis; FMN from riboflavin (ATP route): step 1/1. Its function is as follows. Catalyzes the phosphorylation of riboflavin (vitamin B2) to form flavin mononucleotide (FMN) coenzyme. The sequence is that of Riboflavin kinase (FMN1) from Candida glabrata (strain ATCC 2001 / BCRC 20586 / JCM 3761 / NBRC 0622 / NRRL Y-65 / CBS 138) (Yeast).